We begin with the raw amino-acid sequence, 351 residues long: Ribosomal RNA large subunit methyltransferase M (351 aa).

S-adenosyl-L-methionine contacts are provided by residues Ser186, 219-222 (APGG), Asp238, Asp258, and Asp274. The active-site Proton acceptor is the Lys303.

Belongs to the class I-like SAM-binding methyltransferase superfamily. RNA methyltransferase RlmE family. RlmM subfamily. As to quaternary structure, monomer.

The protein resides in the cytoplasm. The enzyme catalyses cytidine(2498) in 23S rRNA + S-adenosyl-L-methionine = 2'-O-methylcytidine(2498) in 23S rRNA + S-adenosyl-L-homocysteine + H(+). In terms of biological role, catalyzes the 2'-O-methylation at nucleotide C2498 in 23S rRNA. In Xylella fastidiosa (strain M12), this protein is Ribosomal RNA large subunit methyltransferase M.